Reading from the N-terminus, the 102-residue chain is Plastocyanin (102 aa).

The Plastocyanin-like domain maps to 1–102 (AKVEVGDEVG…ANMKGTLTVK (102 aa)). Residues His37, Cys87, His90, and Met95 each coordinate Cu cation.

This sequence belongs to the plastocyanin family. Requires Cu(2+) as cofactor.

The protein localises to the plastid. The protein resides in the chloroplast thylakoid membrane. In terms of biological role, participates in electron transfer between P700 and the cytochrome b6-f complex in photosystem I. The protein is Plastocyanin (PETE) of Dryopteris crassirhizoma (Thick stemmed wood fern).